A 368-amino-acid polypeptide reads, in one-letter code: Repressor ROX1 (368 aa).

A DNA-binding region (HMG box) is located at residues 10–83; sequence IPRPKNAFIL…EHERKYPEYK (74 aa). Disordered regions lie at residues 100–121 and 242–273; these read IEQQ…QPQL and SSQT…SSVL. The segment covering 102–121 has biased composition (low complexity); that stretch reads QQQQQQQKEQQQQKQSQPQL.

Its subcellular location is the nucleus. Its function is as follows. Transcription factor that represses the expression of HEM13, COX5B, ANB1, CYC7 or AAC3 (hypoxic function). Binds to the DNA sequence 5'-RRRTAACAAGAG-3'. This Saccharomyces cerevisiae (strain ATCC 204508 / S288c) (Baker's yeast) protein is Repressor ROX1 (ROX1).